The following is a 101-amino-acid chain: Small ribosomal subunit protein uS14A (101 aa).

Residues 29 to 73 form a disordered region; it reads AIISSPSTPADARAAAQSELNRQPRDASPVRVRNRDAVDGRPRGH. Residues 61–70 are compositionally biased toward basic and acidic residues; sequence RNRDAVDGRP.

The protein belongs to the universal ribosomal protein uS14 family. In terms of assembly, part of the 30S ribosomal subunit. Contacts proteins S3 and S10.

Binds 16S rRNA, required for the assembly of 30S particles and may also be responsible for determining the conformation of the 16S rRNA at the A site. The chain is Small ribosomal subunit protein uS14A from Mycolicibacterium gilvum (strain PYR-GCK) (Mycobacterium gilvum (strain PYR-GCK)).